Consider the following 349-residue polypeptide: Anthranilate phosphoribosyltransferase (349 aa).

5-phospho-alpha-D-ribose 1-diphosphate contacts are provided by residues Gly-82, Gly-85 to Asp-86, Asn-92 to Thr-95, Lys-110 to Gly-118, and Ser-122. Gly-82 contributes to the anthranilate binding site. Position 94 (Ser-94) interacts with Mg(2+). Asn-113 provides a ligand contact to anthranilate. Anthranilate is bound at residue Arg-168. Mg(2+)-binding residues include Asp-227 and Glu-228.

Belongs to the anthranilate phosphoribosyltransferase family. Homodimer. Mg(2+) serves as cofactor.

The catalysed reaction is N-(5-phospho-beta-D-ribosyl)anthranilate + diphosphate = 5-phospho-alpha-D-ribose 1-diphosphate + anthranilate. It participates in amino-acid biosynthesis; L-tryptophan biosynthesis; L-tryptophan from chorismate: step 2/5. In terms of biological role, catalyzes the transfer of the phosphoribosyl group of 5-phosphorylribose-1-pyrophosphate (PRPP) to anthranilate to yield N-(5'-phosphoribosyl)-anthranilate (PRA). This Pseudomonas syringae pv. tomato (strain ATCC BAA-871 / DC3000) protein is Anthranilate phosphoribosyltransferase.